We begin with the raw amino-acid sequence, 466 residues long: ATP synthase subunit beta (466 aa).

An ATP-binding site is contributed by 153 to 160 (GGAGVGKT).

Belongs to the ATPase alpha/beta chains family. In terms of assembly, F-type ATPases have 2 components, CF(1) - the catalytic core - and CF(0) - the membrane proton channel. CF(1) has five subunits: alpha(3), beta(3), gamma(1), delta(1), epsilon(1). CF(0) has three main subunits: a(1), b(2) and c(9-12). The alpha and beta chains form an alternating ring which encloses part of the gamma chain. CF(1) is attached to CF(0) by a central stalk formed by the gamma and epsilon chains, while a peripheral stalk is formed by the delta and b chains.

It is found in the cell membrane. It catalyses the reaction ATP + H2O + 4 H(+)(in) = ADP + phosphate + 5 H(+)(out). Its function is as follows. Produces ATP from ADP in the presence of a proton gradient across the membrane. The catalytic sites are hosted primarily by the beta subunits. The protein is ATP synthase subunit beta of Clostridium acetobutylicum (strain ATCC 824 / DSM 792 / JCM 1419 / IAM 19013 / LMG 5710 / NBRC 13948 / NRRL B-527 / VKM B-1787 / 2291 / W).